Reading from the N-terminus, the 497-residue chain is MSSMPKQTDVILIGAGVMSATLGVLLKELAPDMKIKVFEKLASAGEESSNEWNNAGTGHAALCELNYTTENADGTIDISKAVKVNEQFQLSRQFWSHLVKEQVLPNPKEFIMPIPHMSMVEGAENVTFLKKRLEALSANPLFKGMEFSEDPEQLKEWIPLIMEGRTSPEPIAATKIDSGTDVNFGALTRILFDHLKQLDVEINYGHGVEDLKRVDGGWEIKVKNERDNRIEHHTAKFVFIGGGGGSLPLLQKTGIPESKQIGGFPVSGLFLVCKNPEIAERHHAKVYGKAKVGAPPMSVPHLDTRYIDGQKSLLFGPFAGFSPKFLKTGSNLDLITSVKPNNVLTMLAAGAKEMGLTKYLIEQVLLSTEQRMNELREFIPNAKTEDWDVVVAGQRVQVIKDTPQGKGALQFGTEVVSAADGSVAALLGASPGASTAVPVMLEVLAKCFPDQLPSWEAKIKEMIPSYGTSLVANPELFDQIHAETTKTLELTEAQPIR.

This sequence belongs to the MQO family. FAD is required as a cofactor.

It carries out the reaction (S)-malate + a quinone = a quinol + oxaloacetate. Its pathway is carbohydrate metabolism; tricarboxylic acid cycle; oxaloacetate from (S)-malate (quinone route): step 1/1. This Exiguobacterium sibiricum (strain DSM 17290 / CCUG 55495 / CIP 109462 / JCM 13490 / 255-15) protein is Probable malate:quinone oxidoreductase.